The following is a 565-amino-acid chain: uncharacterized protein (565 aa).

Helical transmembrane passes span 4–26, 33–55, 68–90, 97–119, and 162–184; these read FVQF…AVWV, GYGL…VGAA, SLLY…VNAL, YAIL…TQFF, and ISAM…IILL. RCK C-terminal domains are found at residues 210–295 and 296–379; these read PNVD…LGPE and VPDA…IFGV. The next 5 helical transmembrane spans lie at 389–411, 415–432, 453–472, 482–504, and 539–561; these read LLTL…PAFG, GLGN…VSSI, LGLI…DLLT, IFIV…GFHI, and WLGF…YFAM.

Belongs to the AAE transporter (TC 2.A.81) family.

It localises to the cell membrane. This is an uncharacterized protein from Bordetella bronchiseptica (strain ATCC BAA-588 / NCTC 13252 / RB50) (Alcaligenes bronchisepticus).